The following is a 445-amino-acid chain: UDP-N-acetylmuramoylalanine--D-glutamate ligase (445 aa).

126–132 (GTSGKTT) lines the ATP pocket.

This sequence belongs to the MurCDEF family.

The protein localises to the cytoplasm. The enzyme catalyses UDP-N-acetyl-alpha-D-muramoyl-L-alanine + D-glutamate + ATP = UDP-N-acetyl-alpha-D-muramoyl-L-alanyl-D-glutamate + ADP + phosphate + H(+). It functions in the pathway cell wall biogenesis; peptidoglycan biosynthesis. Its function is as follows. Cell wall formation. Catalyzes the addition of glutamate to the nucleotide precursor UDP-N-acetylmuramoyl-L-alanine (UMA). The chain is UDP-N-acetylmuramoylalanine--D-glutamate ligase from Nitratidesulfovibrio vulgaris (strain DSM 19637 / Miyazaki F) (Desulfovibrio vulgaris).